We begin with the raw amino-acid sequence, 638 residues long: 1-deoxy-D-xylulose-5-phosphate synthase (638 aa).

Thiamine diphosphate contacts are provided by residues His-77 and 118–120 (AHA). Position 149 (Asp-149) interacts with Mg(2+). Residues 150 to 151 (GS), Asn-178, Tyr-287, and Glu-369 each bind thiamine diphosphate. Asn-178 is a Mg(2+) binding site.

This sequence belongs to the transketolase family. DXPS subfamily. Homodimer. Mg(2+) serves as cofactor. Thiamine diphosphate is required as a cofactor.

It catalyses the reaction D-glyceraldehyde 3-phosphate + pyruvate + H(+) = 1-deoxy-D-xylulose 5-phosphate + CO2. It functions in the pathway metabolic intermediate biosynthesis; 1-deoxy-D-xylulose 5-phosphate biosynthesis; 1-deoxy-D-xylulose 5-phosphate from D-glyceraldehyde 3-phosphate and pyruvate: step 1/1. Catalyzes the acyloin condensation reaction between C atoms 2 and 3 of pyruvate and glyceraldehyde 3-phosphate to yield 1-deoxy-D-xylulose-5-phosphate (DXP). This chain is 1-deoxy-D-xylulose-5-phosphate synthase, found in Phenylobacterium zucineum (strain HLK1).